A 607-amino-acid polypeptide reads, in one-letter code: Arginine decarboxylase (607 aa).

An N6-(pyridoxal phosphate)lysine modification is found at Lys-104. 290 to 300 (LDCGGGLGVDY) is a substrate binding site.

Belongs to the Orn/Lys/Arg decarboxylase class-II family. SpeA subfamily. The cofactor is pyridoxal 5'-phosphate. Mg(2+) is required as a cofactor.

It carries out the reaction L-arginine + H(+) = agmatine + CO2. It functions in the pathway amine and polyamine biosynthesis; agmatine biosynthesis; agmatine from L-arginine: step 1/1. This Avena sativa (Oat) protein is Arginine decarboxylase (SPE1).